Here is a 155-residue protein sequence, read N- to C-terminus: Transcriptional repressor NrdR (155 aa).

A compositionally biased stretch (basic residues) spans 1-10; sequence MQCPHCHHNS. The segment at 1–21 is disordered; the sequence is MQCPHCHHNSSRVVDSRPTDG. Residues 3 to 34 fold into a zinc finger; sequence CPHCHHNSSRVVDSRPTDGGRAIRRRRECENC. The 91-residue stretch at 49–139 folds into the ATP-cone domain; the sequence is LLVIKKNGTR…VYRQFKDMSV (91 aa).

Belongs to the NrdR family. It depends on Zn(2+) as a cofactor.

Negatively regulates transcription of bacterial ribonucleotide reductase nrd genes and operons by binding to NrdR-boxes. The protein is Transcriptional repressor NrdR of Lacticaseibacillus casei (strain BL23) (Lactobacillus casei).